Consider the following 276-residue polypeptide: Pirin-like protein CC_0481 (276 aa).

The protein belongs to the pirin family.

In Caulobacter vibrioides (strain ATCC 19089 / CIP 103742 / CB 15) (Caulobacter crescentus), this protein is Pirin-like protein CC_0481.